Here is a 78-residue protein sequence, read N- to C-terminus: Large ribosomal subunit protein bL28 (78 aa).

The protein belongs to the bacterial ribosomal protein bL28 family.

The protein is Large ribosomal subunit protein bL28 of Rippkaea orientalis (strain PCC 8801 / RF-1) (Cyanothece sp. (strain PCC 8801)).